The sequence spans 1414 residues: Phenyloxazoline synthase MbtB (1414 aa).

The 74-residue stretch at 5 to 78 (TACSEIIRAE…AWSQLVSAGT (74 aa)) folds into the Carrier 1 domain. Position 39 is an O-(pantetheine 4'-phosphoryl)serine (serine 39). The interval 96-394 (EGEPFPLAPM…SSLLLDVDLT (299 aa)) is condensation/cyclization. Positions 579–975 (SYAQLRDQAS…RLPGVHAAAA (397 aa)) are adenylation. Residues 1057-1135 (APRTVLQRAL…ALAQLLTGRE (79 aa)) enclose the Carrier 2 domain. Serine 1094 carries the O-(pantetheine 4'-phosphoryl)serine modification. The tract at residues 1188-1413 (GAVLVFPHAG…AVARMVSADV (226 aa)) is thioesterase.

Belongs to the ATP-dependent AMP-binding enzyme family. MbtB subfamily. Pantetheine 4'-phosphate is required as a cofactor. Post-translationally, 4'-phosphopantetheine is transferred from CoA to a specific serine in each of the two carrier protein domains, leading to their activation from apo to holo forms.

It functions in the pathway siderophore biosynthesis; mycobactin biosynthesis. Involved in the initial steps of the mycobactin biosynthetic pathway. Putatively couples activated salicylic acid with serine or threonine and cyclizes this precursor to the hydroxyphenyloxazoline ring system present in this class of siderophores. Essential for growth in macrophages. The polypeptide is Phenyloxazoline synthase MbtB (mbtB) (Mycobacterium tuberculosis (strain ATCC 25618 / H37Rv)).